Consider the following 556-residue polypeptide: Urocanate hydratase (556 aa).

Residues 52 to 53 (GG), glutamine 130, 176 to 178 (GMG), glutamate 196, arginine 201, 242 to 243 (NA), 263 to 267 (QTSAH), 273 to 274 (YL), and tyrosine 322 contribute to the NAD(+) site. Cysteine 410 is an active-site residue. Position 492 (glycine 492) interacts with NAD(+).

It belongs to the urocanase family. NAD(+) serves as cofactor.

It is found in the cytoplasm. The enzyme catalyses 4-imidazolone-5-propanoate = trans-urocanate + H2O. Its pathway is amino-acid degradation; L-histidine degradation into L-glutamate; N-formimidoyl-L-glutamate from L-histidine: step 2/3. Catalyzes the conversion of urocanate to 4-imidazolone-5-propionate. The chain is Urocanate hydratase from Shewanella oneidensis (strain ATCC 700550 / JCM 31522 / CIP 106686 / LMG 19005 / NCIMB 14063 / MR-1).